The following is a 155-amino-acid chain: Riboflavin kinase (155 aa).

The ATP site is built by Gly-15, Lys-21, Thr-27, and Asn-29. 2 residues coordinate Mg(2+): Thr-27 and Asn-29. The active-site Nucleophile is the Glu-79. ATP contacts are provided by Ile-82, His-84, and Tyr-91. Residues Arg-104, Lys-107, and Phe-109 each coordinate FMN.

In terms of assembly, monomer. Directly interacts with TNFRSF1A death domain; this interaction may be supported by TRADD. In the absence of TNFRSF1A, interacts with TRADD. Independently of TNFRSF1A, interacts with the NADPH oxidase subunit CYBA. The cofactor is Zn(2+). It depends on Mg(2+) as a cofactor.

Its subcellular location is the cytoplasm. The enzyme catalyses riboflavin + ATP = FMN + ADP + H(+). It functions in the pathway cofactor biosynthesis; FMN biosynthesis; FMN from riboflavin (ATP route): step 1/1. Catalyzes the phosphorylation of riboflavin (vitamin B2) to form flavin-mononucleotide (FMN), hence rate-limiting enzyme in the synthesis of FAD. Essential for TNF-induced reactive oxygen species (ROS) production. Through its interaction with both TNFRSF1A and CYBA, physically and functionally couples TNFRSF1A to NADPH oxidase. TNF-activation of RFK may enhance the incorporation of FAD in NADPH oxidase, a critical step for the assembly and activation of NADPH oxidase. This Mus musculus (Mouse) protein is Riboflavin kinase (Rfk).